The chain runs to 41 residues: Large ribosomal subunit protein bL36A (41 aa).

The protein belongs to the bacterial ribosomal protein bL36 family.

In Vibrio cholerae serotype O1 (strain ATCC 39541 / Classical Ogawa 395 / O395), this protein is Large ribosomal subunit protein bL36A.